The following is a 62-amino-acid chain: Large ribosomal subunit protein eL37 (62 aa).

Zn(2+) contacts are provided by C20, C23, C35, and C38. The C4-type zinc-finger motif lies at 20 to 38; that stretch reads CRRCGRKAFNVKKGYCAAC.

The protein belongs to the eukaryotic ribosomal protein eL37 family. It depends on Zn(2+) as a cofactor.

Functionally, binds to the 23S rRNA. The sequence is that of Large ribosomal subunit protein eL37 (rpl37e) from Pyrococcus abyssi (strain GE5 / Orsay).